The chain runs to 320 residues: MPVLGPERRLLASLSSAPPAAPRLGLAANQTNQTGPQCLEVSIPDGLFLSLGLVSLVENVLVVAAIAKNRNLHSPMYYFVCCLAVSDLLVSVSNVLETAVLLLLEAGALAAQAAVVQQLDNVMDVLICGSMVSSLCFLGAIAVDRYVSIFYALRYHSIVTLPRAGRAIAAIWAGSVLSSTLFIAYYHHTAVLLGLVSFFVAMLALMAVLYVHMLARACQHGRHIARLHKTQHPTRQGCGLKGAATLTILLGVFLLCWAPFFLHLSLVVLCPQHPTCGCVFKNVNLFLALVICNSIVDPLIYAFRSQELRKTLQEVLQCSW.

Topologically, residues 1 to 40 (MPVLGPERRLLASLSSAPPAAPRLGLAANQTNQTGPQCLE) are extracellular. An N-linked (GlcNAc...) asparagine glycan is attached at asparagine 32. A helical membrane pass occupies residues 41–66 (VSIPDGLFLSLGLVSLVENVLVVAAI). The Cytoplasmic segment spans residues 67–75 (AKNRNLHSP). Residues 76-96 (MYYFVCCLAVSDLLVSVSNVL) form a helical membrane-spanning segment. Residues 97–121 (ETAVLLLLEAGALAAQAAVVQQLDN) are Extracellular-facing. A helical transmembrane segment spans residues 122–143 (VMDVLICGSMVSSLCFLGAIAV). Topologically, residues 144 to 166 (DRYVSIFYALRYHSIVTLPRAGR) are cytoplasmic. The chain crosses the membrane as a helical span at residues 167 to 186 (AIAAIWAGSVLSSTLFIAYY). Topologically, residues 187-194 (HHTAVLLG) are extracellular. Residues 195–214 (LVSFFVAMLALMAVLYVHML) form a helical membrane-spanning segment. The Cytoplasmic portion of the chain corresponds to 215–243 (ARACQHGRHIARLHKTQHPTRQGCGLKGA). Residues 244-269 (ATLTILLGVFLLCWAPFFLHLSLVVL) traverse the membrane as a helical segment. The Extracellular portion of the chain corresponds to 270 to 282 (CPQHPTCGCVFKN). Residues 283-303 (VNLFLALVICNSIVDPLIYAF) traverse the membrane as a helical segment. Topologically, residues 304–320 (RSQELRKTLQEVLQCSW) are cytoplasmic.

This sequence belongs to the G-protein coupled receptor 1 family. In terms of assembly, interacts with MGRN1, but does not undergo MGRN1-mediated ubiquitination; this interaction competes with GNAS-binding and thus inhibits agonist-induced cAMP production. Interacts with OPN3; the interaction results in a decrease in MC1R-mediated cAMP signaling and ultimately a decrease in melanin production in melanocytes.

The protein localises to the cell membrane. Its function is as follows. Receptor for MSH (alpha, beta and gamma) and ACTH. The activity of this receptor is mediated by G proteins which activate adenylate cyclase. Mediates melanogenesis, the production of eumelanin (black/brown) and phaeomelanin (red/yellow), via regulation of cAMP signaling in melanocytes. The sequence is that of Melanocyte-stimulating hormone receptor (MC1R) from Sus scrofa (Pig).